Here is a 310-residue protein sequence, read N- to C-terminus: 300 kDa antigen AG231 (310 aa).

The 4 X 6 AA tandem repeats of V-V-T-G-S-C stretch occupies residues 1–23 (VTGSCVVTGSCVVTDSCVVTGSC). Positions 29–106 (VTTQESVTTQ…TQEPVTVEEH (78 aa)) are 13 X 6 AA tandem repeats of V-V-[TI]-[QE]-E-[PH]. The segment covering 53–101 (VTIEEPVTTQEPVTIEEPVTTQEPVTTQEPVTTQEPVTTQEPVTTQEPV) has biased composition (low complexity). Residues 53 to 310 (VTIEEPVTTQ…FGRGNKNDKK (258 aa)) form a disordered region. Composition is skewed to basic and acidic residues over residues 103–114 (VEEHIDEKKGSE) and 147–160 (NKNDKKSKNEKKPS). The stretch at 107–152 (IDEKKGSEGDNISLSSLSEETEEKSHTKKKKSSWLKFGRGNKNDKK) is one 45 AA repeat 1 repeat. A compositionally biased stretch (polar residues) spans 176 to 190 (TDSQISVNAQDSVTI). The interval 188 to 265 (VTIQEPTATQ…TQEPSTTQEH (78 aa)) is 13 X 6 AA approximate tandem repeats. Residues 191–235 (QEPTATQEPPTTQELTATQEPTTTQETVTEQEPTTTQETVTAQEP) are compositionally biased toward low complexity. Positions 236–263 (ITTQEPVTAQEPVTTQELIATQEPSTTQ) are enriched in polar residues. Over residues 264–273 (EHADEKKASE) the composition is skewed to basic and acidic residues. Residues 266-310 (ADEKKASEGDNISLSRLSEETEEKSHTKKKSSWLKFGRGNKNDKK) form a 45 AA repeat 2 repeat.

The polypeptide is 300 kDa antigen AG231 (FIRA) (Plasmodium falciparum (isolate FC27 / Papua New Guinea)).